The primary structure comprises 316 residues: Pantothenate kinase (316 aa).

95–102 (GSVAVGKS) is a binding site for ATP.

This sequence belongs to the prokaryotic pantothenate kinase family.

The protein resides in the cytoplasm. The enzyme catalyses (R)-pantothenate + ATP = (R)-4'-phosphopantothenate + ADP + H(+). It functions in the pathway cofactor biosynthesis; coenzyme A biosynthesis; CoA from (R)-pantothenate: step 1/5. In Enterobacter sp. (strain 638), this protein is Pantothenate kinase.